An 802-amino-acid polypeptide reads, in one-letter code: MWIQVRTIDGSKTCTIEDVSRKATIEELRERVWALFDVRPECQRLFYRGKQLENGYTLFDYDVGLNDIIQLLVRPDPDHLPGTSTQIEAKPCSNSPPKVKKAPRVGPSNQPSTSARARLIDPGFGIYKVNELVDARDVGLGAWFEAHIHSVTRASDGQSRGKTPLKNGSSCKRTNGNIKHKSKENTNKLDSVPSTSNSDCVAADEDVIYHIQYDEYPESGTLEMNVKDLRPRARTILKWNELNVGDVVMVNYNVESPGQRGFWFDAEITTLKTISRTKKELRVKIFLGGSEGTLNDCKIISVDEIFKIERPGAHPLSFADGKFLRRNDPECDLCGGDPEKKCHSCSCRVCGGKHEPNMQLLCDECNVAYHIYCLNPPLDKVPEEEYWYCPSCKTDSSEVVKAGERLKMSKKKAKMPSASTESRRDWGRGMACVGRTRECTIVPSNHYGPIPGIPVGSTWRFRVQVSEAGVHRPHVGGIHGRSNDGAYSLVLAGGFADEVDRGDEFTYTGSGGKNLAGNKRIGAPSADQTLTNMNRALALNCDAPLDDKIGAESRNWRAGKPVRVIRSFKGRKISKYAPEEGNRYDGIYKVVKYWPEISSSHGFLVWRYLLRRDDVEPAPWTSEGIERSRRLCLRLQYPAGYPSDKEGKKPKGQSKKQPSGTTKRPISDDDCPSASKVYKASDSAEAIEAFQLTPQQQHLIREDCQNQKLWDEVLSHLVEGPNFLKKLEQSFMCVCCQELVYQPVTTECFHNVCKDCLQRSFKAQVFSCPACRHDLGQNYIMIPNEILQTLLDLFFPGYSKGR.

A Ubiquitin-like domain is found at methionine 1 to aspartate 78. Disordered stretches follow at residues leucine 80–arginine 116 and arginine 153–asparagine 197. Polar residues-rich tracts occupy residues glycine 82–proline 96, arginine 153–asparagine 177, and lysine 188–asparagine 197. The required for interaction with histone H3 stretch occupies residues alanine 117–proline 311. The tract at residues serine 194 to glycine 288 is interaction with PCNP. Residues serine 344–aspartate 395 form a PHD-type zinc finger. The interval lysine 414–aspartate 644 is methyl-CpG binding and interaction with HDAC1. A YDG domain is found at glycine 448–arginine 612. The interval glycine 640–alanine 674 is disordered. Serine 667 bears the Phosphoserine mark. The segment at cysteine 733–arginine 772 adopts an RING-type zinc-finger fold.

As to quaternary structure, homodimer; disulfide-linked. Binds methylated CpG containing oligonucleotides. Interacts with H3; the interaction has a preference for the 'Lys-9' trimethylated form of H3 (H3K9me3). Interacts with PCNP. Interacts with HDAC1. Interacts directly with CCNE1; the interaction ubiquitinates CCNE1 and appears independent of CCNE1 phosphorylation. Interacts with CCND1; the interaction ubiquitinates CCND1 and appears independent of CCND1 phosphorylation. Interacts with p53/TP53 and RB1. Interacts with UBE2I. Interacts with ZNF618. Interacts with UHRF1. Interacts with FANCD2. Interacts with ATR. Interacts with PCNA. May be autoubiquitinated; which may lead to proteasomal degradation. Post-translationally, phosphorylated. Phosphorylation may be mediated by CDK2. In terms of processing, autosumoylated.

The protein localises to the nucleus. Its subcellular location is the chromosome. It catalyses the reaction S-ubiquitinyl-[E2 ubiquitin-conjugating enzyme]-L-cysteine + [acceptor protein]-L-lysine = [E2 ubiquitin-conjugating enzyme]-L-cysteine + N(6)-ubiquitinyl-[acceptor protein]-L-lysine.. Its pathway is protein modification; protein ubiquitination. Its activity is regulated as follows. E3 ligase activity is robustly activated by 5-hydroxymethylcytosine. Functionally, E3 ubiquitin ligase that plays important roles in DNA methylation, histone modifications, cell cycle and DNA repair. Acts as a specific reader for 5-hydroxymethylcytosine (5hmC) and thereby recruits various substrates to these sites to ubiquitinate them. This activity also allows the maintenance of 5mC levels at specific genomic loci and regulates neuron-related gene expression. Participates in cell cycle regulation by ubiquitinating cyclins CCND1 and CCNE1 and thereby inducing G1 arrest. Also ubiquitinates PCNP leading to its degradation by the proteasome. Plays an active role in DNA damage repair by ubiquitinating p21/CDKN1A leading to its proteasomal degradation. Also promotes DNA repair by acting as an interstrand cross-links (ICLs) sensor. Mechanistically, cooperates with UHRF1 to ensure recruitment of FANCD2 to ICLs, leading to FANCD2 monoubiquitination and subsequent activation. Contributes to UV-induced DNA damage response by physically interacting with ATR in response to irradiation, thereby promoting ATR activation. This is E3 ubiquitin-protein ligase UHRF2 (UHRF2) from Homo sapiens (Human).